Reading from the N-terminus, the 382-residue chain is LIM homeobox transcription factor 1-alpha (382 aa).

LIM zinc-binding domains lie at Ser-33–Val-92 and Val-92–Leu-154. Disordered stretches follow at residues Ala-161–Arg-208 and Lys-252–Gly-285. The segment at residues Pro-195–Ala-254 is a DNA-binding region (homeobox). The span at Arg-256 to Arg-269 shows a compositional bias: low complexity.

In terms of tissue distribution, isoform 1 is expressed in many tissues. Not found in heart, liver, spleen and testis. Relatively highly expressed in fetal brain. Isoform LMX1A-4AB is expressed in testis.

It is found in the nucleus. Acts as a transcriptional activator by binding to an A/T-rich sequence, the FLAT element, in the insulin gene promoter. Required for development of the roof plate and, in turn, for specification of dorsal cell fates in the CNS and developing vertebrae. This Homo sapiens (Human) protein is LIM homeobox transcription factor 1-alpha (LMX1A).